The chain runs to 440 residues: Chromosomal replication initiator protein DnaA (440 aa).

The tract at residues M1–N74 is domain I, interacts with DnaA modulators. The domain II stretch occupies residues N74 to T99. The tract at residues I100–A316 is domain III, AAA+ region. ATP contacts are provided by G146, G148, K149, and T150. The segment at T317 to S440 is domain IV, binds dsDNA.

The protein belongs to the DnaA family. Oligomerizes as a right-handed, spiral filament on DNA at oriC.

The protein resides in the cytoplasm. In terms of biological role, plays an essential role in the initiation and regulation of chromosomal replication. ATP-DnaA binds to the origin of replication (oriC) to initiate formation of the DNA replication initiation complex once per cell cycle. Binds the DnaA box (a 9 base pair repeat at the origin) and separates the double-stranded (ds)DNA. Forms a right-handed helical filament on oriC DNA; dsDNA binds to the exterior of the filament while single-stranded (ss)DNA is stabiized in the filament's interior. The ATP-DnaA-oriC complex binds and stabilizes one strand of the AT-rich DNA unwinding element (DUE), permitting loading of DNA polymerase. After initiation quickly degrades to an ADP-DnaA complex that is not apt for DNA replication. Binds acidic phospholipids. The sequence is that of Chromosomal replication initiator protein DnaA from Campylobacter jejuni subsp. jejuni serotype O:23/36 (strain 81-176).